Consider the following 369-residue polypeptide: UPF0284 protein cce_1085 (369 aa).

The protein belongs to the UPF0284 family.

This chain is UPF0284 protein cce_1085, found in Crocosphaera subtropica (strain ATCC 51142 / BH68) (Cyanothece sp. (strain ATCC 51142)).